The chain runs to 171 residues: Myosin regulatory light chain 12A (171 aa).

Position 18 is a phosphothreonine; by MLCK (Thr18). Ser19 bears the Phosphoserine; by MLCK mark. 3 consecutive EF-hand domains span residues 28 to 63, 97 to 132, and 133 to 168; these read SQIQ…LGKN, DPED…MGDR, and FTDE…GAKD. Residues Asp41, Asn43, Asp45, and Asp52 each contribute to the Ca(2+) site.

As to quaternary structure, myosin is a hexamer of 2 heavy chains and 4 light chains. Phosphorylation increases the actin-activated myosin ATPase activity and thereby regulates the contractile activity. It is required to generate the driving force in the migration of the cells but not necessary for localization of myosin-2 at the leading edge.

Its function is as follows. Myosin regulatory subunit that plays an important role in regulation of both smooth muscle and nonmuscle cell contractile activity via its phosphorylation. Implicated in cytokinesis, receptor capping, and cell locomotion. In Homo sapiens (Human), this protein is Myosin regulatory light chain 12A (MYL12A).